Here is a 102-residue protein sequence, read N- to C-terminus: Large ribosomal subunit protein bL21 (102 aa).

It belongs to the bacterial ribosomal protein bL21 family. Part of the 50S ribosomal subunit. Contacts protein L20.

This protein binds to 23S rRNA in the presence of protein L20. The polypeptide is Large ribosomal subunit protein bL21 (Bacillus anthracis (strain A0248)).